A 121-amino-acid polypeptide reads, in one-letter code: Large ribosomal subunit protein uL18 (121 aa).

It belongs to the universal ribosomal protein uL18 family. In terms of assembly, part of the 50S ribosomal subunit; part of the 5S rRNA/L5/L18/L25 subcomplex. Contacts the 5S and 23S rRNAs.

This is one of the proteins that bind and probably mediate the attachment of the 5S RNA into the large ribosomal subunit, where it forms part of the central protuberance. The protein is Large ribosomal subunit protein uL18 of Caldanaerobacter subterraneus subsp. tengcongensis (strain DSM 15242 / JCM 11007 / NBRC 100824 / MB4) (Thermoanaerobacter tengcongensis).